The chain runs to 104 residues: Protamine-3 (104 aa).

The tract at residues 1-104 (MGSRCAKLST…PSPEPKQKHS (104 aa)) is disordered. Over residues 45-70 (EGEEEEEDEEDEEEEDDDEEDEEEEQ) the composition is skewed to acidic residues. Residue Ser96 is modified to Phosphoserine.

The protein belongs to the protamine P3 family. Testis.

It localises to the nucleus. The protein resides in the chromosome. In terms of biological role, protamines substitute for histones in the chromatin of sperm during the haploid phase of spermatogenesis. They compact sperm DNA into a highly condensed, stable and inactive complex. The protein is Protamine-3 (Prm3) of Rattus norvegicus (Rat).